Reading from the N-terminus, the 245-residue chain is tRNA (guanine-N(1)-)-methyltransferase (245 aa).

S-adenosyl-L-methionine contacts are provided by residues Gly114 and Ile134–Leu139.

This sequence belongs to the RNA methyltransferase TrmD family. As to quaternary structure, homodimer.

The protein resides in the cytoplasm. It catalyses the reaction guanosine(37) in tRNA + S-adenosyl-L-methionine = N(1)-methylguanosine(37) in tRNA + S-adenosyl-L-homocysteine + H(+). Specifically methylates guanosine-37 in various tRNAs. In Listeria monocytogenes serotype 4b (strain CLIP80459), this protein is tRNA (guanine-N(1)-)-methyltransferase.